Consider the following 701-residue polypeptide: Elongation factor G 2 (701 aa).

The 283-residue stretch at 8 to 290 (NRYRNIGIVA…AVIEFLPAPA (283 aa)) folds into the tr-type G domain. GTP-binding positions include 17-24 (AHVDAGKT), 88-92 (DTPGH), and 142-145 (NKMD).

This sequence belongs to the TRAFAC class translation factor GTPase superfamily. Classic translation factor GTPase family. EF-G/EF-2 subfamily.

It is found in the cytoplasm. Catalyzes the GTP-dependent ribosomal translocation step during translation elongation. During this step, the ribosome changes from the pre-translocational (PRE) to the post-translocational (POST) state as the newly formed A-site-bound peptidyl-tRNA and P-site-bound deacylated tRNA move to the P and E sites, respectively. Catalyzes the coordinated movement of the two tRNA molecules, the mRNA and conformational changes in the ribosome. The sequence is that of Elongation factor G 2 from Pseudoalteromonas atlantica (strain T6c / ATCC BAA-1087).